The sequence spans 309 residues: MELKNDTQISKFILLGISEDPLWQPFLFGLFLFMYLVTLLGNLLIIIATITDSHLHTPMYFFLSNLSFADICFTSASIPKMLVNIQTKNKVITYEGCISQVFFFILFGVLDNFLLAVMAYDRYVAICHPLHYMVIMNCRLCGFLVLGSWVTTALNSLLQSSMALRLSFCTDLKIPHFVCELNQLVLLACNDTFPNDMVMYFAAILLGGGPLAGILYSYSKIVSSIRAISSSQGKYKAFSTCASHLSVVSLFYSTLLGVYLSSSFTQNSHSTARASVMYSVVTPMLNPFIYSLRNKDLMGALRRLLRRKS.

Residues 1 to 26 (MELKNDTQISKFILLGISEDPLWQPF) lie on the Extracellular side of the membrane. The N-linked (GlcNAc...) asparagine glycan is linked to Asn5. The chain crosses the membrane as a helical span at residues 27 to 47 (LFGLFLFMYLVTLLGNLLIII). Topologically, residues 48-57 (ATITDSHLHT) are cytoplasmic. The helical transmembrane segment at 58–78 (PMYFFLSNLSFADICFTSASI) threads the bilayer. Over 79-97 (PKMLVNIQTKNKVITYEGC) the chain is Extracellular. Cys97 and Cys179 are oxidised to a cystine. The helical transmembrane segment at 98–118 (ISQVFFFILFGVLDNFLLAVM) threads the bilayer. Topologically, residues 119–139 (AYDRYVAICHPLHYMVIMNCR) are cytoplasmic. A helical transmembrane segment spans residues 140–160 (LCGFLVLGSWVTTALNSLLQS). Residues 161–196 (SMALRLSFCTDLKIPHFVCELNQLVLLACNDTFPND) are Extracellular-facing. Residues 197–217 (MVMYFAAILLGGGPLAGILYS) form a helical membrane-spanning segment. The Cytoplasmic segment spans residues 218–244 (YSKIVSSIRAISSSQGKYKAFSTCASH). The chain crosses the membrane as a helical span at residues 245–265 (LSVVSLFYSTLLGVYLSSSFT). The Extracellular segment spans residues 266–269 (QNSH). The chain crosses the membrane as a helical span at residues 270 to 292 (STARASVMYSVVTPMLNPFIYSL). The Cytoplasmic portion of the chain corresponds to 293–309 (RNKDLMGALRRLLRRKS).

The protein belongs to the G-protein coupled receptor 1 family.

The protein resides in the cell membrane. Its function is as follows. Odorant receptor. This chain is Olfactory receptor 7A40, found in Mus musculus (Mouse).